A 419-amino-acid polypeptide reads, in one-letter code: MAHTLAQKILQRHTDEAITDAGQIVRCRVSMVLANDITAPLAIKSFRAMGAKRVFDKDRVALVMDHFTPQKDIEAAQQVKLTREFAREMGVTHYYEGGDCGVEHALLPELGLVGPGDVVVGADSHTCTYGGLGAFATGLGSTDVAGAMALGETWFKVPPTIRATFTGTLPAYVGAKDLILTLIGAIGVDGALYRALEFDGAAIEALDVEGRMTMANMAIEAGGKAGLFAADAKTLTYCTTAGRTGDTAFSADAGAVYERELSFDVTGMTPVVACPHLPDNVKPVSEVKDVTVQQVVIGSCTNGRIGDLREAAAVLRGRKVSRDVRCIVLPATPGIWRQALREGLIETFMEAGCIVGPATCGPCLGGHMGILADGERAIATTNRNFKGRMGSLESEVYLSGPATAAASAVTGVITDPSTL.

[4Fe-4S] cluster-binding residues include Cys-300, Cys-360, and Cys-363.

It belongs to the aconitase/IPM isomerase family. LeuC type 2 subfamily. Heterodimer of LeuC and LeuD. It depends on [4Fe-4S] cluster as a cofactor.

It carries out the reaction (2R,3S)-3-isopropylmalate = (2S)-2-isopropylmalate. It functions in the pathway amino-acid biosynthesis; L-leucine biosynthesis; L-leucine from 3-methyl-2-oxobutanoate: step 2/4. Functionally, catalyzes the isomerization between 2-isopropylmalate and 3-isopropylmalate, via the formation of 2-isopropylmaleate. This Nitratidesulfovibrio vulgaris (strain ATCC 29579 / DSM 644 / CCUG 34227 / NCIMB 8303 / VKM B-1760 / Hildenborough) (Desulfovibrio vulgaris) protein is 3-isopropylmalate dehydratase large subunit.